A 338-amino-acid polypeptide reads, in one-letter code: Ketol-acid reductoisomerase (NADP(+)) (338 aa).

The KARI N-terminal Rossmann domain maps to 1–181 (MKVYYDKDAD…GGTRGGVIET (181 aa)). NADP(+)-binding positions include 24 to 27 (YGSQ), R47, and S52. H107 is a catalytic residue. G133 lines the NADP(+) pocket. The KARI C-terminal knotted domain maps to 182–327 (TFKEETETDL…SRLRDMMPWI (146 aa)). Mg(2+)-binding residues include D190, E194, E226, and E230. S251 contributes to the substrate binding site.

This sequence belongs to the ketol-acid reductoisomerase family. The cofactor is Mg(2+).

It carries out the reaction (2R)-2,3-dihydroxy-3-methylbutanoate + NADP(+) = (2S)-2-acetolactate + NADPH + H(+). The enzyme catalyses (2R,3R)-2,3-dihydroxy-3-methylpentanoate + NADP(+) = (S)-2-ethyl-2-hydroxy-3-oxobutanoate + NADPH + H(+). It functions in the pathway amino-acid biosynthesis; L-isoleucine biosynthesis; L-isoleucine from 2-oxobutanoate: step 2/4. The protein operates within amino-acid biosynthesis; L-valine biosynthesis; L-valine from pyruvate: step 2/4. Its function is as follows. Involved in the biosynthesis of branched-chain amino acids (BCAA). Catalyzes an alkyl-migration followed by a ketol-acid reduction of (S)-2-acetolactate (S2AL) to yield (R)-2,3-dihydroxy-isovalerate. In the isomerase reaction, S2AL is rearranged via a Mg-dependent methyl migration to produce 3-hydroxy-3-methyl-2-ketobutyrate (HMKB). In the reductase reaction, this 2-ketoacid undergoes a metal-dependent reduction by NADPH to yield (R)-2,3-dihydroxy-isovalerate. This Nitrosomonas eutropha (strain DSM 101675 / C91 / Nm57) protein is Ketol-acid reductoisomerase (NADP(+)).